The chain runs to 314 residues: Aspartate carbamoyltransferase catalytic subunit (314 aa).

The carbamoyl phosphate site is built by arginine 55 and threonine 56. Lysine 83 serves as a coordination point for L-aspartate. Carbamoyl phosphate-binding residues include arginine 105, histidine 139, and glutamine 142. Arginine 172 and arginine 226 together coordinate L-aspartate. 2 residues coordinate carbamoyl phosphate: glycine 267 and proline 268.

This sequence belongs to the aspartate/ornithine carbamoyltransferase superfamily. ATCase family. Heterododecamer (2C3:3R2) of six catalytic PyrB chains organized as two trimers (C3), and six regulatory PyrI chains organized as three dimers (R2).

It carries out the reaction carbamoyl phosphate + L-aspartate = N-carbamoyl-L-aspartate + phosphate + H(+). It functions in the pathway pyrimidine metabolism; UMP biosynthesis via de novo pathway; (S)-dihydroorotate from bicarbonate: step 2/3. Functionally, catalyzes the condensation of carbamoyl phosphate and aspartate to form carbamoyl aspartate and inorganic phosphate, the committed step in the de novo pyrimidine nucleotide biosynthesis pathway. The polypeptide is Aspartate carbamoyltransferase catalytic subunit (Rhodococcus erythropolis (strain PR4 / NBRC 100887)).